We begin with the raw amino-acid sequence, 148 residues long: Lysozyme C (148 aa).

Positions 1–18 (MKALIILGLVLLSVMVQA) are cleaved as a signal peptide. The region spanning 19–148 (KVFERCELAR…LRQYIQGCGV (130 aa)) is the C-type lysozyme domain. Disulfide bonds link Cys-24/Cys-146, Cys-48/Cys-134, Cys-83/Cys-99, and Cys-95/Cys-113. Catalysis depends on residues Glu-53 and Asp-71.

Belongs to the glycosyl hydrolase 22 family. Monomer.

Its subcellular location is the secreted. The catalysed reaction is Hydrolysis of (1-&gt;4)-beta-linkages between N-acetylmuramic acid and N-acetyl-D-glucosamine residues in a peptidoglycan and between N-acetyl-D-glucosamine residues in chitodextrins.. Functionally, lysozymes have primarily a bacteriolytic function; those in tissues and body fluids are associated with the monocyte-macrophage system and enhance the activity of immunoagents. The sequence is that of Lysozyme C (LYZ) from Hylobates lar (Lar gibbon).